The chain runs to 255 residues: MALPDFSMRQLLEAGVHFGHQTHRWNPKMKPYIFGDRNNIHIIDLAQTVPMLSRALQVVSDTVARGGRVLFVGTKRQASEIIADSAKRSAQYYVNSRWLGGMMTNWKTISNSIQRLRKLDEILNGEAQGFTKKERLNLEREREKLDKALGGIRDMGGTPDLMFIIDTNKEKIAIDEAKRLGIPVVAIIDSNCDPDLIDYPIPGNDDASRAIALYCELISRAAIDGIARQQSSSGRDLGASSEVPVEPALEEAAEG.

Residues 230–255 (QSSSGRDLGASSEVPVEPALEEAAEG) form a disordered region.

This sequence belongs to the universal ribosomal protein uS2 family.

The chain is Small ribosomal subunit protein uS2 from Rhizobium leguminosarum bv. trifolii (strain WSM2304).